The following is a 293-amino-acid chain: Small ribosomal subunit protein uS2 (293 aa).

Positions 265–293 (DGGDWAASSAPAPGGENWAEAQPAEGAKW) are disordered.

It belongs to the universal ribosomal protein uS2 family. Component of the small ribosomal subunit. Mature ribosomes consist of a small (40S) and a large (60S) subunit. The 40S subunit contains about 33 different proteins and 1 molecule of RNA (18S). The 60S subunit contains about 49 different proteins and 3 molecules of RNA (25S, 5.8S and 5S). Interacts with rps21.

It localises to the cytoplasm. In terms of biological role, required for the assembly and/or stability of the 40S ribosomal subunit. Required for the processing of the 20S rRNA-precursor to mature 18S rRNA in a late step of the maturation of 40S ribosomal subunits. The chain is Small ribosomal subunit protein uS2 (rps0) from Emericella nidulans (strain FGSC A4 / ATCC 38163 / CBS 112.46 / NRRL 194 / M139) (Aspergillus nidulans).